A 134-amino-acid polypeptide reads, in one-letter code: Holo-[acyl-carrier-protein] synthase (134 aa).

Residues aspartate 8 and glutamate 57 each contribute to the Mg(2+) site.

This sequence belongs to the P-Pant transferase superfamily. AcpS family. It depends on Mg(2+) as a cofactor.

The protein resides in the cytoplasm. The enzyme catalyses apo-[ACP] + CoA = holo-[ACP] + adenosine 3',5'-bisphosphate + H(+). Functionally, transfers the 4'-phosphopantetheine moiety from coenzyme A to a Ser of acyl-carrier-protein. In Brucella abortus (strain S19), this protein is Holo-[acyl-carrier-protein] synthase.